An 899-amino-acid polypeptide reads, in one-letter code: Inositol 1,4,5-triphosphate receptor associated 1 (899 aa).

4 disordered regions span residues 32-110 (PGTH…HRHL), 164-286 (RRGR…PLQH), 324-391 (KTAR…EEPG), and 463-486 (AAEQ…SKSG). A compositionally biased stretch (basic residues) spans 100 to 110 (SPHRRLSHRHL). S106 carries the phosphoserine modification. Residues 140–172 (SEEDKKKNLALLEEAKLVSERFLTRRGRKSRSS) are interaction with PRKG1. Residues 171–180 (SSLGDSPSAV) are compositionally biased toward polar residues. Residues 181 to 203 (SPNLSSGASPASSRSCSLTISTS) are compositionally biased toward low complexity. Positions 266 to 281 (TVEKTKELTVEQKENF) are enriched in basic and acidic residues. Residues 333-351 (PRTTAQGSGGTVSPHSLGQ) show a composition bias toward polar residues. Position 382 is a phosphoserine (S382). An interaction with ITPR1 region spans residues 521–567 (NVFVQLSLAFRNDSYTLESRINQAERERNLTEENTEKELENFKASIT). Positions 534–632 (SYTLESRINQ…MQYVENLKRT (99 aa)) form a coiled coil. Phosphoserine is present on residues S670 and S683. Disordered regions lie at residues 695 to 722 (LPGQ…SSIS) and 757 to 818 (TSQE…DQGS). The segment covering 699–715 (APSSSPMPSLPALSESS) has biased composition (low complexity). Composition is skewed to basic and acidic residues over residues 759 to 770 (QETKAKAEEEAY) and 777 to 787 (GVKKTEELQDL). Residues 788–814 (KEEEEEEQKTESPEEPEEVEETQEDEK) show a composition bias toward acidic residues. The chain crosses the membrane as a helical span at residues 839 to 859 (WQVIWMMAAVMLVLSVVLGLY). The disordered stretch occupies residues 867–899 (EEADGPPGRSTCSAAQRDSWWSSGLQQELPAEQ). Polar residues predominate over residues 876-892 (STCSAAQRDSWWSSGLQ).

As to quaternary structure, part of cGMP kinase signaling complex at least composed of ACTA2/alpha-actin, CNN1/calponin H1, PLN/phospholamban, PRKG1 and ITPR1. Interacts with PRKG1/cGKI-beta and ITPR1/IP3R type I. Interacts with HCN4; regulates HCN4 channel activity. In terms of processing, phosphorylated by PRKG1/cGKI. In terms of tissue distribution, highly expressed in smooth muscle such as aorta, colon and uterus. Detected in the brain, in the thalamus, in the hippocampus and myenteric plexus. Highly expressed in megakaryocytes. Down-regulated during macrophage differentiation.

The protein localises to the membrane. Its subcellular location is the cytoplasm. It is found in the perinuclear region. The protein resides in the sarcoplasmic reticulum. Functionally, plays a role as NO/PRKG1-dependent regulator of IP3-induced calcium release; its phosphorylation by PRKG1 inhibits bradykinin and IP3-induced calcium release from intracellular stores. Recruits PRKG1 to the endoplasmic reticulum and may mediate the assembly of PRKG1 and ITPR1 in a macrocomplex. Involved in PRKG1 signaling cascade leading to inhibition of platelet activation and aggregation. Also mediates NO-dependent inhibition of calcium signaling in gastrointestinal smooth muscle contributing to NO-dependent relaxation. Plays a role in the regulation of cellular excitability by regulating the hyperpolarization-activated cyclic nucleotide-gated HCN4 channel activity. The protein is Inositol 1,4,5-triphosphate receptor associated 1 (Irag1) of Mus musculus (Mouse).